We begin with the raw amino-acid sequence, 582 residues long: MGFNVIRLLRGSAVAVVLAPTVLLTMLSSAERGCPKGCRCEGKMVYCESQKLQEIPSSISAGCLGLSLRYNSLQKLKYNQFKGLNQLTWLYLDHNHISNIDENAFNGIRRLKELILSSNRISYFLNNTFRPVTNLRNLDLSYNQLHSLGSEQFRGLRKLLSLHLRSNSLRTIPVRIFQDCRNLELLDLGYNRIRSLARNVFAGMIRLKELHLEHNQFSKLNLALFPRLVSLQNLYMQWNKISVIGQTMSWTWSSLQRLDLSGNEIEAFSGPSVFQCVPNLQRLNLDSNKLTFIGQEILDSWISLNDISLAGNIWECSRNICSLVNWLRSFKGLRENTIICASPKELQGVNVIDAVKNYSICGKSTTTERFDLARALPKPTFKPKLPRPKHESKPPLPPTVGATEPSPETDVDTEHISFHKIIAGSVALFLSVLVILLVMYVSWKRYPASMKQLQQRSLMRRHRKKKRQSLKQMTPGTQEFYVDYKPTNTETSEMLLNGTGPCTYSKSGSRECEIPLSMNVSTFLAYDQPTISYCGVHHELLSHKSFETNAQEDTMESHLETELDLSTITSAGRISDHKPQLA.

Positions 1–30 (MGFNVIRLLRGSAVAVVLAPTVLLTMLSSA) are cleaved as a signal peptide. An LRRNT domain is found at 31–61 (ERGCPKGCRCEGKMVYCESQKLQEIPSSISA). The Extracellular portion of the chain corresponds to 31-420 (ERGCPKGCRC…VDTEHISFHK (390 aa)). LRR repeat units lie at residues 63 to 83 (CLGLSLRYNSLQKLKYNQFKG), 86 to 107 (QLTWLYLDHNHISNIDENAFNG), 110 to 131 (RLKELILSSNRISYFLNNTFRP), 134 to 155 (NLRNLDLSYNQLHSLGSEQFRG), 158 to 179 (KLLSLHLRSNSLRTIPVRIFQD), 182 to 203 (NLELLDLGYNRIRSLARNVFAG), 206 to 226 (RLKELHLEHNQFSKLNLALFP), 230 to 251 (SLQNLYMQWNKISVIGQTMSWT), 254 to 275 (SLQRLDLSGNEIEAFSGPSVFQ), and 279 to 300 (NLQRLNLDSNKLTFIGQEILDS). Residue Asn-126 is glycosylated (N-linked (GlcNAc...) asparagine). Residues 312 to 363 (NIWECSRNICSLVNWLRSFKGLRENTIICASPKELQGVNVIDAVKNYSICGK) enclose the LRRCT domain. N-linked (GlcNAc...) asparagine glycosylation occurs at Asn-357. A disordered region spans residues 378-410 (KPTFKPKLPRPKHESKPPLPPTVGATEPSPETD). The chain crosses the membrane as a helical span at residues 421–441 (IIAGSVALFLSVLVILLVMYV). Residues 442–582 (SWKRYPASMK…RISDHKPQLA (141 aa)) are Cytoplasmic-facing.

The protein belongs to the LRRTM family. In terms of tissue distribution, expressed in neuronal tissues.

Its subcellular location is the cell membrane. The protein resides in the postsynaptic cell membrane. Its function is as follows. May play a role in the development and maintenance of the vertebrate nervous system. Exhibits a limited synaptogenic activity in vitro, restricted to excitatory presynaptic differentiation. This Mus musculus (Mouse) protein is Leucine-rich repeat transmembrane neuronal protein 3 (Lrrtm3).